A 238-amino-acid chain; its full sequence is 2-C-methyl-D-erythritol 4-phosphate cytidylyltransferase (238 aa).

Belongs to the IspD/TarI cytidylyltransferase family. IspD subfamily.

The catalysed reaction is 2-C-methyl-D-erythritol 4-phosphate + CTP + H(+) = 4-CDP-2-C-methyl-D-erythritol + diphosphate. The protein operates within isoprenoid biosynthesis; isopentenyl diphosphate biosynthesis via DXP pathway; isopentenyl diphosphate from 1-deoxy-D-xylulose 5-phosphate: step 2/6. Its function is as follows. Catalyzes the formation of 4-diphosphocytidyl-2-C-methyl-D-erythritol from CTP and 2-C-methyl-D-erythritol 4-phosphate (MEP). This chain is 2-C-methyl-D-erythritol 4-phosphate cytidylyltransferase, found in Leptospira interrogans serogroup Icterohaemorrhagiae serovar copenhageni (strain Fiocruz L1-130).